The primary structure comprises 197 residues: Small ribosomal subunit protein uS4c (197 aa).

One can recognise an S4 RNA-binding domain in the interval 85–161 (MRLDNILFRL…TGKELANHLN (77 aa)).

This sequence belongs to the universal ribosomal protein uS4 family. Part of the 30S ribosomal subunit. Contacts protein S5. The interaction surface between S4 and S5 is involved in control of translational fidelity.

It localises to the plastid. Its function is as follows. One of the primary rRNA binding proteins, it binds directly to 16S rRNA where it nucleates assembly of the body of the 30S subunit. In terms of biological role, with S5 and S12 plays an important role in translational accuracy. The sequence is that of Small ribosomal subunit protein uS4c (rps4) from Cuscuta sandwichiana (Kauna'oa).